Consider the following 97-residue polypeptide: Large ribosomal subunit protein uL23 (97 aa).

The protein belongs to the universal ribosomal protein uL23 family. Part of the 50S ribosomal subunit. Contacts protein L29, and trigger factor when it is bound to the ribosome.

Its function is as follows. One of the early assembly proteins it binds 23S rRNA. One of the proteins that surrounds the polypeptide exit tunnel on the outside of the ribosome. Forms the main docking site for trigger factor binding to the ribosome. In Brachyspira hyodysenteriae (strain ATCC 49526 / WA1), this protein is Large ribosomal subunit protein uL23.